We begin with the raw amino-acid sequence, 429 residues long: UPF0242 protein CT_616 (429 aa).

It belongs to the UPF0242 family.

The chain is UPF0242 protein CT_616 from Chlamydia trachomatis serovar D (strain ATCC VR-885 / DSM 19411 / UW-3/Cx).